The chain runs to 461 residues: MLKIFNTLSRQKEEFKPIHAGKVGMYVCGITIYDLCHIGHGRTFVAFDVVARYLRYLGYSLTYVRNVTDVDDKIIKRALENNETCEQLTTRMLVEMHKDFDALNLKRPDLEPRATHHIPEIIALTERLIARNHAYVAANGDVMFSVESDPDYGLLSRQDLDQLQAGARVEVADVKRNPMDFVLWKMSKPGEPSWESPWGPGRPGWHIECSAMNGKQLGAHFDIHGGGSDLMFPHHENEIAQSTCAHDGPYVNYWMHSGMVMIDKEKMSKSLNNFFTIRDVLAYYDAETVRYFLMSGHYRSQLNYSEENLKQARASLERLYTALRGTDANATPAGGAEFEARFRAAMDDDFNTPEAYSVLFDIAREVNRLKTEDITAANALAAELRKLAYVLGLLEQDPELFLQSGAQTDDDEVAKIEVLIKQRNDARSSKDWALADSARDQLNELGIVLEDGPQGTTWRRK.

Residue C28 participates in Zn(2+) binding. The short motif at 30–40 (ITIYDLCHIGH) is the 'HIGH' region element. C209, H234, and E238 together coordinate Zn(2+). The 'KMSKS' region motif lies at 266–270 (KMSKS). K269 contributes to the ATP binding site.

Belongs to the class-I aminoacyl-tRNA synthetase family. As to quaternary structure, monomer. Requires Zn(2+) as cofactor.

It localises to the cytoplasm. It carries out the reaction tRNA(Cys) + L-cysteine + ATP = L-cysteinyl-tRNA(Cys) + AMP + diphosphate. This is Cysteine--tRNA ligase from Yersinia enterocolitica serotype O:8 / biotype 1B (strain NCTC 13174 / 8081).